A 190-amino-acid chain; its full sequence is MINIVLFGKPGAGKGTQAEFLKEKYNLTHLSTGDIFRFNIKNETELGKLAKTFMDKGDLVPDAVTIKMLESEVDKNQHSKGFLFDGFPRTLAQAAALDTFLASKDQEVTATIALEADDEILVQRLLERGKTSGRVDDQDEEKIRNRYQEYNEKTAPLMSYYKNNKKFHAVNGIGTIQEITKRLSEVINNL.

Gly-11–Thr-16 lines the ATP pocket. The interval Ser-31 to Val-60 is NMP. AMP is bound by residues Thr-32, Arg-37, Asp-58–Val-60, Gly-86–Arg-89, and Gln-93. Residues Glu-127 to Asp-137 are LID. Residue Arg-128 coordinates ATP. AMP contacts are provided by Arg-134 and Arg-146. ATP is bound at residue Gly-174.

This sequence belongs to the adenylate kinase family. Monomer.

It is found in the cytoplasm. It catalyses the reaction AMP + ATP = 2 ADP. The protein operates within purine metabolism; AMP biosynthesis via salvage pathway; AMP from ADP: step 1/1. In terms of biological role, catalyzes the reversible transfer of the terminal phosphate group between ATP and AMP. Plays an important role in cellular energy homeostasis and in adenine nucleotide metabolism. In Flavobacterium psychrophilum (strain ATCC 49511 / DSM 21280 / CIP 103535 / JIP02/86), this protein is Adenylate kinase.